The chain runs to 329 residues: MSEASKSIMDLLSEVVKITDMTMDNEAVNKLKPQIKINPFYRAVQDVLVEQKSKIDLSTKMMKDLEAQENDERLDTMLKAEGVAGPDDSLLRIQEAAGTDQYEYRQQLLKVRRELENETKAFDKHCKKWCEYVEDVLQQQGEFRPITQQSTEKFMNKMSGKFNKVCFVLKQTACEEVIQLKKRYLDARRKRRNFSKTSTEILNEYFLANINHPYPSEEVKQALAMQCNISVAQVSNWFGNKRIRYKKTMAKNEDERRENRKPEDRPPPGAPGAPYSLVPNAFAGMMNPYQMMLPGHQFPIGVAPFNFSMYNPEMMAQYQQSLQNPNQTR.

In terms of domain architecture, PBC spans 3–186 (EASKSIMDLL…VIQLKKRYLD (184 aa)). The PBC-A stretch occupies residues 10–90 (DLLSEVVKIT…EGVAGPDDSL (81 aa)). Residues 93–186 (IQEAAGTDQY…VIQLKKRYLD (94 aa)) are PBC-B. Positions 187–249 (ARRKRRNFSK…NKRIRYKKTM (63 aa)) form a DNA-binding region, homeobox; TALE-type. The tract at residues 248–275 (TMAKNEDERRENRKPEDRPPPGAPGAPY) is disordered. Over residues 250–266 (AKNEDERRENRKPEDRP) the composition is skewed to basic and acidic residues.

The protein belongs to the TALE/PBX homeobox family. As to expression, expressed in head dopaminergic neurons.

Its subcellular location is the nucleus. Functionally, plays a role in regulating gene expression in dopaminergic neurons, acting redundantly with homeobox protein ceh-20 in head neurons. May activate dopamine pathway genes in concert with ETS domain-containing protein ast-1, and homeobox proteins ceh-43 and ceh-20. The polypeptide is Homeobox protein ceh-40 (ceh-40) (Caenorhabditis elegans).